The primary structure comprises 622 residues: Chaperone protein HscA homolog (622 aa).

It belongs to the heat shock protein 70 family.

Its function is as follows. Chaperone involved in the maturation of iron-sulfur cluster-containing proteins. Has a low intrinsic ATPase activity which is markedly stimulated by HscB. The polypeptide is Chaperone protein HscA homolog (Burkholderia thailandensis (strain ATCC 700388 / DSM 13276 / CCUG 48851 / CIP 106301 / E264)).